Reading from the N-terminus, the 382-residue chain is Dual-specificity RNA methyltransferase RlmN (382 aa).

Residue Glu-95 is the Proton acceptor of the active site. Positions 101-347 constitute a Radical SAM core domain; it reads EDDRGTLCIS…TTVRKTRGDD (247 aa). Cys-108 and Cys-352 form a disulfide bridge. [4Fe-4S] cluster is bound by residues Cys-115, Cys-119, and Cys-122. Residues 178–179, Ser-210, 232–234, and Asn-309 contribute to the S-adenosyl-L-methionine site; these read GE and SLH. Residue Cys-352 is the S-methylcysteine intermediate of the active site.

Belongs to the radical SAM superfamily. RlmN family. It depends on [4Fe-4S] cluster as a cofactor.

Its subcellular location is the cytoplasm. The enzyme catalyses adenosine(2503) in 23S rRNA + 2 reduced [2Fe-2S]-[ferredoxin] + 2 S-adenosyl-L-methionine = 2-methyladenosine(2503) in 23S rRNA + 5'-deoxyadenosine + L-methionine + 2 oxidized [2Fe-2S]-[ferredoxin] + S-adenosyl-L-homocysteine. The catalysed reaction is adenosine(37) in tRNA + 2 reduced [2Fe-2S]-[ferredoxin] + 2 S-adenosyl-L-methionine = 2-methyladenosine(37) in tRNA + 5'-deoxyadenosine + L-methionine + 2 oxidized [2Fe-2S]-[ferredoxin] + S-adenosyl-L-homocysteine. In terms of biological role, specifically methylates position 2 of adenine 2503 in 23S rRNA and position 2 of adenine 37 in tRNAs. m2A2503 modification seems to play a crucial role in the proofreading step occurring at the peptidyl transferase center and thus would serve to optimize ribosomal fidelity. The chain is Dual-specificity RNA methyltransferase RlmN from Bordetella avium (strain 197N).